The primary structure comprises 506 residues: Histidine ammonia-lyase (506 aa).

Residues A143–G145 constitute a cross-link (5-imidazolinone (Ala-Gly)). S144 bears the 2,3-didehydroalanine (Ser) mark.

It belongs to the PAL/histidase family. Post-translationally, contains an active site 4-methylidene-imidazol-5-one (MIO), which is formed autocatalytically by cyclization and dehydration of residues Ala-Ser-Gly.

Its subcellular location is the cytoplasm. The catalysed reaction is L-histidine = trans-urocanate + NH4(+). The protein operates within amino-acid degradation; L-histidine degradation into L-glutamate; N-formimidoyl-L-glutamate from L-histidine: step 1/3. This is Histidine ammonia-lyase from Salmonella gallinarum (strain 287/91 / NCTC 13346).